A 275-amino-acid chain; its full sequence is Low affinity immunoglobulin gamma Fc region receptor III-A (275 aa).

An N-terminal signal peptide occupies residues 1–23; the sequence is MSVWTSRKAAEDNDTSLSSGIRA. Residues 24-207 lie on the Extracellular side of the membrane; it reads GLQKAVVTLH…SPSTFPPWHQ (184 aa). Ig-like C2-type domains lie at 28–92 and 101–192; these read AVVT…YTCQ and PVNL…LRIT. Cystine bridges form between Cys-49-Cys-91 and Cys-131-Cys-175. Residues Asn-65, Asn-168, and Asn-183 are each glycosylated (N-linked (GlcNAc...) asparagine). A helical membrane pass occupies residues 208-228; that stretch reads ITFCLLIGLLFTIDTVMYFSV. The Cytoplasmic portion of the chain corresponds to 229–275; the sequence is QKGLRRSTADYEEPEVHWSKEPENKTISEEKQSFRSSRANSETPENR. Residues 237 to 275 form a disordered region; the sequence is ADYEEPEVHWSKEPENKTISEEKQSFRSSRANSETPENR. Tyr-239 is subject to Phosphotyrosine. Basic and acidic residues predominate over residues 242–261; that stretch reads PEVHWSKEPENKTISEEKQS. Positions 262–275 are enriched in polar residues; that stretch reads FRSSRANSETPENR.

In terms of assembly, forms a heterooligomeric complex with ITAM-containing signaling subunits FCER1G. Interacts (via transmembrane domain) with signaling subunits; this interaction is a prerequisite for receptor complex expression on the cell surface and intracellular signal transduction. Binds the Fc region of antigen-complexed IgG. In terms of processing, N-glycosylated. Post-translationally, phosphorylated following receptor ligation.

It localises to the cell membrane. Its function is as follows. Receptor for the invariable Fc fragment of immunoglobulin gamma (IgG). Binds with intermediate affinity to both IgG2a and IgG2b. Can bind to IgG2a and IgG2b monomers. Does not display binding to IgG1 or IgG3. Recognizes neutralizing virus-specific IgGs displayed on the cell surface of infected cells and triggers antibody-dependent cellular cytotoxicity (ADCC). Confers protection to lethal influenza virus infection. On splenic dendritic cells, uptakes antigen immune complexes and efficiently divert them into MHC class I and II antigen presentation pathways to provide for superior priming of CD4-positive and CD8-positive T cell immune responses. Mediates neutrophil activation by IgG complexes redundantly with FCGR2A. Plays a role in promoting bone resorption by enhancing osteoclast differentiation following binding to IgG2a. Also acts as a receptor for the Fc region of immunoglobulin epsilon (IgE). Binds with low affinity to both the a and b allotypes of IgE. Has also been shown to bind to IgE allotype a only but not to allotype b. Binds aggregated IgE but not the monomeric form and bound monomeric IgG is readily displaced by IgE complexes. Binding to IgE promotes macrophage-mediated phagocytosis, antigen presentation to T cells, production of pro-inflammatory cytokines and the late phase of cutaneous allergic reactions. Mediates enhanced ADCC in response to afucosylated IgGs. The polypeptide is Low affinity immunoglobulin gamma Fc region receptor III-A (Cricetulus griseus (Chinese hamster)).